Consider the following 478-residue polypeptide: MAAAAAGGAPGPAPGPAGPPPPAAPTSAARAPPQALRRRGDSRRRQAALFFLNNISLDGRPPSLGPGGEKPPPPPAEAREPPAPPPPEPPTGLPARTPAPQGLLSPTQVPTGLGLDGQRQRKRVTSQRCSLEFLEDAVGCAPAQRTKHTSGSPRHKGLKKTHFIKNMRQYDTRNSRIVLICAKRSLCAAFSVLPYGEGLRISDLRVDSQKQRHPSGGVSVSSEMVFELEGVELGADGKVVSYAKFLYPTNALVTHKSDSHGLLPTPRPSVPRTLPGSRHKPAPTKSAPASTELGSDVGDTLEYNPNLLDDPQWPCGKHKRVLIFASYMTTVIEYVKPSDLKKDMNETFREKFPHVKLTLSKIRSLKREMRSLSEECSLEPVTVAMAYVYFEKLVLQGKLSKQNRKLCAGACVLLAAKISSDLRKSGVTQLIDKLEERFRFNRRDLIGFEFTVLVALELALYLPENQVLPHYRRLTQQF.

The segment at M1–R121 is disordered. Pro residues predominate over residues G11–A24. The span at P25–A35 shows a compositional bias: low complexity. Residues L36–Q46 show a composition bias toward basic residues. Residues E69–G92 are compositionally biased toward pro residues. 2 positions are modified to phosphoserine: S130 and S208. The tract at residues S257–D296 is disordered.

Belongs to the cyclin family. As to quaternary structure, binds to CDK3, CDK5 and ABL1. The C-terminal cyclin-box-like region binds to CDK5.

Functionally, unknown. Probably involved in G1-S cell cycle transition. This chain is CDK5 and ABL1 enzyme substrate 2 (CABLES2), found in Homo sapiens (Human).